Reading from the N-terminus, the 638-residue chain is Nucleolar protein 58 (638 aa).

The region spanning 284-402 (IAPNLTILVG…VDRRAAAIEG (119 aa)) is the Nop domain. Residues 416 to 638 (KSGNVAKYDH…EEKKSKKSKK (223 aa)) are disordered. Basic and acidic residues-rich tracts occupy residues 437 to 458 (VATKSSKESSIKQEKQDVKMEE), 485 to 521 (KKEETPVAKEEKKEKKSKKEETPVAKEEKKEKEEKKE), 527 to 574 (EKKE…EKKD), and 580 to 632 (EKKE…EEKK).

This sequence belongs to the NOP5/NOP56 family.

It localises to the nucleus. The protein localises to the nucleolus. Functionally, involved in the biogenesis of box C/D snoRNAs. Part of the small subunit (SSU) processome, first precursor of the small eukaryotic ribosomal subunit. Could function in the small subunit (SSU) processome, first precursor of the small eukaryotic ribosomal subunit. During the assembly of the SSU processome in the nucleolus, many ribosome biogenesis factors, an RNA chaperone and ribosomal proteins associate with the nascent pre-rRNA and work in concert to generate RNA folding, modifications, rearrangements and cleavage as well as targeted degradation of pre-ribosomal RNA by the RNA exosome. As a component of box C/D small nucleolar ribonucleoprotein (snoRNP) complexes could function in methylation of ribosomal RNAs (rRNAs). This chain is Nucleolar protein 58 (nop58), found in Dictyostelium discoideum (Social amoeba).